We begin with the raw amino-acid sequence, 372 residues long: Embryonic growth/differentiation factor 1 (372 aa).

Residues 1 to 29 form the signal peptide; the sequence is MPPPQQGPCGHHLLLLLALLLPSLPLTRA. Positions 30–253 are excised as a propeptide; the sequence is PVPPGPAAAL…LCHPLARPRR (224 aa). The interval 67–86 is disordered; the sequence is RRRDPQETRSGSRRTSPGVT. Asn206 carries an N-linked (GlcNAc...) asparagine glycan. Intrachain disulfides connect Cys267–Cys337, Cys296–Cys369, and Cys300–Cys371.

Belongs to the TGF-beta family. As to quaternary structure, homodimer; disulfide-linked. In terms of tissue distribution, expressed in the brain.

The protein localises to the secreted. Functionally, may mediate cell differentiation events during embryonic development. This chain is Embryonic growth/differentiation factor 1 (GDF1), found in Homo sapiens (Human).